The following is a 470-amino-acid chain: 3-isopropylmalate dehydratase large subunit (470 aa).

The disordered stretch occupies residues 50-121 (NVARGCQHRH…PCGRPGAGRH (72 aa)). [4Fe-4S] cluster-binding residues include Cys349, Cys409, and Cys412.

Belongs to the aconitase/IPM isomerase family. LeuC type 1 subfamily. Heterodimer of LeuC and LeuD. The cofactor is [4Fe-4S] cluster.

It catalyses the reaction (2R,3S)-3-isopropylmalate = (2S)-2-isopropylmalate. Its pathway is amino-acid biosynthesis; L-leucine biosynthesis; L-leucine from 3-methyl-2-oxobutanoate: step 2/4. Catalyzes the isomerization between 2-isopropylmalate and 3-isopropylmalate, via the formation of 2-isopropylmaleate. In Azotobacter vinelandii, this protein is 3-isopropylmalate dehydratase large subunit.